Here is a 143-residue protein sequence, read N- to C-terminus: D-aminoacyl-tRNA deacylase (143 aa).

Positions 135–136 match the Gly-cisPro motif, important for rejection of L-amino acids motif; sequence GP.

It belongs to the DTD family. As to quaternary structure, homodimer.

Its subcellular location is the cytoplasm. It carries out the reaction glycyl-tRNA(Ala) + H2O = tRNA(Ala) + glycine + H(+). It catalyses the reaction a D-aminoacyl-tRNA + H2O = a tRNA + a D-alpha-amino acid + H(+). In terms of biological role, an aminoacyl-tRNA editing enzyme that deacylates mischarged D-aminoacyl-tRNAs. Also deacylates mischarged glycyl-tRNA(Ala), protecting cells against glycine mischarging by AlaRS. Acts via tRNA-based rather than protein-based catalysis; rejects L-amino acids rather than detecting D-amino acids in the active site. By recycling D-aminoacyl-tRNA to D-amino acids and free tRNA molecules, this enzyme counteracts the toxicity associated with the formation of D-aminoacyl-tRNA entities in vivo and helps enforce protein L-homochirality. In Mycobacterium avium (strain 104), this protein is D-aminoacyl-tRNA deacylase.